The following is a 201-amino-acid chain: Small ribosomal subunit protein uS4 (201 aa).

Residues 26–45 form a disordered region; that stretch reads FEKRNYPPGQHGNNRRRGKK. The 61-residue stretch at 93–153 folds into the S4 RNA-binding domain; sequence SRLDNVVYRM…EKSKSLAVVQ (61 aa).

Belongs to the universal ribosomal protein uS4 family. In terms of assembly, part of the 30S ribosomal subunit. Contacts protein S5. The interaction surface between S4 and S5 is involved in control of translational fidelity.

Functionally, one of the primary rRNA binding proteins, it binds directly to 16S rRNA where it nucleates assembly of the body of the 30S subunit. In terms of biological role, with S5 and S12 plays an important role in translational accuracy. In Christiangramia forsetii (strain DSM 17595 / CGMCC 1.15422 / KT0803) (Gramella forsetii), this protein is Small ribosomal subunit protein uS4.